A 242-amino-acid polypeptide reads, in one-letter code: Myogenic factor 6 (242 aa).

Residues 31 to 63 (SPLYPGSDGTLSPCQDQMPPEAGSDSSGEEHVL) are disordered. The region spanning 93–144 (DRRKAATLRERRRLKKINEAFEALKRRTVANPNQRLPKVEILRSAINYIERL) is the bHLH domain.

As to quaternary structure, efficient DNA binding requires dimerization with another bHLH protein. Interacts with CSRP3.

Its subcellular location is the nucleus. Involved in muscle differentiation (myogenic factor). Induces fibroblasts to differentiate into myoblasts. Probable sequence specific DNA-binding protein. The protein is Myogenic factor 6 (MYF6) of Bos taurus (Bovine).